Reading from the N-terminus, the 177-residue chain is Superoxide dismutase [Cu-Zn] 1 (177 aa).

An N-terminal signal peptide occupies residues 1–20 (MKYTILSLVAGALISCSAMA). The Cu cation site is built by His69, His71, and His94. Cys76 and Cys172 are joined by a disulfide. The Zn(2+) site is built by His94, His103, His112, and Asp115. His150 lines the Cu cation pocket.

The protein belongs to the Cu-Zn superoxide dismutase family. In terms of assembly, monomer. Cu cation is required as a cofactor. Zn(2+) serves as cofactor.

The protein localises to the periplasm. It catalyses the reaction 2 superoxide + 2 H(+) = H2O2 + O2. Destroys radicals which are normally produced within the cells and which are toxic to biological systems. In Salmonella typhimurium (strain 4/74), this protein is Superoxide dismutase [Cu-Zn] 1 (sodC1).